We begin with the raw amino-acid sequence, 63 residues long: Large ribosomal subunit protein uL29 (63 aa).

The protein belongs to the universal ribosomal protein uL29 family.

This is Large ribosomal subunit protein uL29 from Mannheimia succiniciproducens (strain KCTC 0769BP / MBEL55E).